The chain runs to 252 residues: MGQKTNPIGNRLGIIRGWDSNWYGGNDYGDKLAEDHKIRKYIHARLSKASVSKVIIERTLKLVTVTITTARPGIIIGKGGQEVDKLKEELKKVTDKEVQINIFEIKRPELDAYLVATSIARQIESRISYRRAIKMAIAASMRMNAEGIKVLISGRLNGAEMARSEGFKEGRIPLSTFRADIDYALAEAHTTYGRMGIKVWIMKGEVYGKRDLSPLAGMDKKQSGTGGGKGGDAPRGKSNFNKGGKPDARKRK.

A KH type-2 domain is found at 38–106 (IRKYIHARLS…EVQINIFEIK (69 aa)). Residues 214–252 (PLAGMDKKQSGTGGGKGGDAPRGKSNFNKGGKPDARKRK) are disordered. A compositionally biased stretch (gly residues) spans 224–233 (GTGGGKGGDA).

It belongs to the universal ribosomal protein uS3 family. Part of the 30S ribosomal subunit. Forms a tight complex with proteins S10 and S14.

Its function is as follows. Binds the lower part of the 30S subunit head. Binds mRNA in the 70S ribosome, positioning it for translation. The chain is Small ribosomal subunit protein uS3 from Flavobacterium johnsoniae (strain ATCC 17061 / DSM 2064 / JCM 8514 / BCRC 14874 / CCUG 350202 / NBRC 14942 / NCIMB 11054 / UW101) (Cytophaga johnsonae).